The chain runs to 126 residues: Mating-type protein A1 (126 aa).

The segment at residues 70–126 (SPKGKSSISPQARAFLEQVFRRKQSLNSKEKEEVAKKCGITPLQVRVWFINKRMRSK) is a DNA-binding region (homeobox).

Belongs to the MATA1 family. As to quaternary structure, binds DNA with a high specificity as a heterodimer of A1 and ALPHA2.

It is found in the nucleus. Mating type proteins are sequence specific DNA-binding proteins that act as master switches in yeast differentiation by controlling gene expression in a cell type-specific fashion. Transcriptional corepressor that, in a/alpha diploid cells, binds cooperatively with the ALPHA2 protein to a 21-bp DNA sequence termed the haploid-specific gene (hsg) operator, to repress transcription of haploid-specific genes and of MATALPHA1. The protein is Mating-type protein A1 (MATA1) of Saccharomyces cerevisiae (Baker's yeast).